The chain runs to 340 residues: MSRKFMQVYEYDREQYLDEFIEDRYNDSFITSPEYYSAEKYMCRYTTLNHNCVNVRRCALDSKLLHDIITNCKIYNNIELVRATKFVYYLDLIKCNWVSKVGDSVLYPVIFITHTSTRNLDKVSVKTYKGVKVKKLNRCADHAIVINPFVKFKLTLPNKTSHAKVLVTFCKLRTDITPVEAPLPGNVLVYTFPDINKRIPGYIHVNIEGCIDGMIYINSSKFACVLKLHRSMYRIPPFPIDICSCCSQYTNDDIEIPIHDLIKDVAIFKNKETVYYLKLNNKTIARFTYFNNIDTAITQEHEYVKIALGIVCKLMINNMHSIVGVNHSNTFVNCLLEDNV.

Belongs to the orthopoxvirus B17 protein family.

This chain is Protein B17, found in Vaccinia virus (strain Copenhagen) (VACV).